A 398-amino-acid chain; its full sequence is Subtilisin-like protease CPC735_015300 (398 aa).

The signal sequence occupies residues methionine 1–alanine 19. Residues alanine 20 to threonine 116 constitute a propeptide that is removed on maturation. An Inhibitor I9 domain is found at glutamine 35 to leucine 115. Residues threonine 126–glutamine 398 enclose the Peptidase S8 domain. Active-site charge relay system residues include aspartate 158 and histidine 189. Asparagine 250 carries N-linked (GlcNAc...) asparagine glycosylation. Residue serine 344 is the Charge relay system of the active site. N-linked (GlcNAc...) asparagine glycosylation is present at asparagine 362.

This sequence belongs to the peptidase S8 family.

It is found in the secreted. In terms of biological role, secreted subtilisin-like serine protease with keratinolytic activity that contributes to pathogenicity. The sequence is that of Subtilisin-like protease CPC735_015300 from Coccidioides posadasii (strain C735) (Valley fever fungus).